A 221-amino-acid chain; its full sequence is ATP-dependent Clp protease proteolytic subunit 1, mitochondrial (221 aa).

Residues 1–25 (MLRRLVTSSLSASRSMSASVQSRVG) constitute a mitochondrion transit peptide. Catalysis depends on S120, which acts as the Nucleophile. H145 is an active-site residue.

This sequence belongs to the peptidase S14 family. In terms of assembly, tetradecamer that assembles into a two heptameric rings with a central cavity. In terms of tissue distribution, expressed in the intestine.

Its subcellular location is the mitochondrion matrix. The catalysed reaction is Hydrolysis of proteins to small peptides in the presence of ATP and magnesium. alpha-casein is the usual test substrate. In the absence of ATP, only oligopeptides shorter than five residues are hydrolyzed (such as succinyl-Leu-Tyr-|-NHMec, and Leu-Tyr-Leu-|-Tyr-Trp, in which cleavage of the -Tyr-|-Leu- and -Tyr-|-Trp bonds also occurs).. Functionally, clp cleaves peptides in various proteins in a process that requires ATP hydrolysis. Clp may be responsible for a fairly general and central housekeeping function rather than for the degradation of specific substrates. The protein is ATP-dependent Clp protease proteolytic subunit 1, mitochondrial (clpp-1) of Caenorhabditis elegans.